A 1165-amino-acid chain; its full sequence is Sperm-associated antigen 5 (1165 aa).

The segment at 1-23 (MWRVKTLNLGLSPSPQKGKPAMS) is disordered. A phosphoserine mark is found at serine 12, serine 14, serine 66, serine 161, serine 321, serine 333, and serine 342. The segment at 431 to 457 (TVPHREARDSSTQTDSSPCGVTKTPKH) is disordered. The segment covering 440 to 449 (SSTQTDSSPC) has biased composition (polar residues). Residues 453-821 (KTPKHLQDSK…LRDTVDSLRA (369 aa)) form an interaction with KNSTRN region. Residues 509 to 856 (RSKTLVSSCS…LLAEQLQSLT (348 aa)) are a coiled coil. The disordered stretch occupies residues 875-907 (PSTGSAPAQEHPLSNDSSISEQTPTAAVDEVPE). The segment covering 876 to 897 (STGSAPAQEHPLSNDSSISEQT) has biased composition (polar residues). Positions 937–1146 (DLEKSLAEMS…IQHVYETLLS (210 aa)) form a coiled coil. At serine 946 the chain carries Phosphoserine; by GSK3-beta.

As to quaternary structure, homodimer, with a globular head domain and a long stalk. Homooligomer; the globular head domains associate, resulting in aster-like structures. Binds to microtubules in the mitotic spindle. Interacts with DCLRE1B/Apollo. Part of an astrin (SPAG5)-kinastrin (SKAP) complex containing KNSTRN, SPAG5, PLK1, DYNLL1 and SGO2A. Interacts with KNSTRN. Interacts with RPTOR; this interaction competes with RPTOR binding to MTOR, resulting in decreased mTORC1 formation. Interacts with G3BP1. The complex formed with G3BP1 and RPTOR is increased by oxidative stress. Interacts with OSBPL8, PCM1 and CDK5RAP2. Interacts (via C-terminus) with NUMA1 (via C-terminus); this interaction promotes the recruitment of SPAG5 to the microtubules at spindle poles in a dynein-dynactin-dependent manner. Interacts with DYNLL1. Phosphorylated by AURKA. As to expression, detected in testis, but not in the other tissues tested.

The protein localises to the cytoplasm. Its subcellular location is the cytoskeleton. It is found in the spindle. It localises to the spindle pole. The protein resides in the chromosome. The protein localises to the centromere. Its subcellular location is the kinetochore. It is found in the midbody. It localises to the microtubule organizing center. The protein resides in the centrosome. The protein localises to the centriolar satellite. Functionally, essential component of the mitotic spindle required for normal chromosome segregation and progression into anaphase. Required for chromosome alignment, normal timing of sister chromatid segregation, and maintenance of spindle pole architecture. In complex with SKAP, promotes stable microtubule-kinetochore attachments. May contribute to the regulation of separase activity. May regulate AURKA localization to mitotic spindle, but not to centrosomes and CCNB1 localization to both mitotic spindle and centrosomes. Involved in centriole duplication. Required for CDK5RAP22, CEP152, WDR62 and CEP63 centrosomal localization and promotes the centrosomal localization of CDK2. In non-mitotic cells, upon stress induction, inhibits mammalian target of rapamycin complex 1 (mTORC1) association and recruits the mTORC1 component RPTOR to stress granules (SGs), thereby preventing mTORC1 hyperactivation-induced apoptosis. May enhance GSK3B-mediated phosphorylation of other substrates, such as MAPT/TAU. This is Sperm-associated antigen 5 (Spag5) from Mus musculus (Mouse).